Reading from the N-terminus, the 262-residue chain is Acyl-[acyl-carrier-protein]--UDP-N-acetylglucosamine O-acyltransferase (262 aa).

The protein belongs to the transferase hexapeptide repeat family. LpxA subfamily. Homotrimer.

The protein resides in the cytoplasm. It carries out the reaction a (3R)-hydroxyacyl-[ACP] + UDP-N-acetyl-alpha-D-glucosamine = a UDP-3-O-[(3R)-3-hydroxyacyl]-N-acetyl-alpha-D-glucosamine + holo-[ACP]. Its pathway is glycolipid biosynthesis; lipid IV(A) biosynthesis; lipid IV(A) from (3R)-3-hydroxytetradecanoyl-[acyl-carrier-protein] and UDP-N-acetyl-alpha-D-glucosamine: step 1/6. Functionally, involved in the biosynthesis of lipid A, a phosphorylated glycolipid that anchors the lipopolysaccharide to the outer membrane of the cell. This chain is Acyl-[acyl-carrier-protein]--UDP-N-acetylglucosamine O-acyltransferase, found in Klebsiella pneumoniae (strain 342).